The chain runs to 132 residues: MADPGHVFRRAFSWLPSQFASQSDAPVGAPRQFGSTEHLSVEAIAAFVDGELRMSAHLRAAHHLSLCPECAAEVDAQSQARTALRESCPIAIPNSLLGMLSQIPHRTPEVTPDVSEQAKFADDPTRGRRKRR.

At Thr36 the chain carries Phosphothreonine; by PknB. The Zn(2+) site is built by His63, Cys67, and Cys70. A disordered region spans residues 106–132 (RTPEVTPDVSEQAKFADDPTRGRRKRR).

Belongs to the zinc-associated anti-sigma factor (ZAS) superfamily. Interacts with ECF RNA polymerase sigma factor SigE, interaction is abrogated by treatment of cells with H(2)O(2), detergent or vancomycin (the latter 2 cause surface stress). This probably inhibits the interaction of SigE with the RNA polymerase catalytic core. It depends on Zn(2+) as a cofactor. Phosphorylated by PknB on Thr-36; can be dephosphorylated (at least in vitro) by PstP. Phosphorylation is the signal for subsequent degradation by the ClpC1-ClpP2 complex. In terms of processing, degraded following vancomycin treatment (surface stress) by a ClpC1-ClpP2 complex.

Its subcellular location is the cytoplasm. Its function is as follows. An anti-sigma factor for extracytoplasmic function (ECF) sigma factor SigE. ECF sigma factors are held in an inactive form by an anti-sigma factor. The chain is Anti-sigma-E factor RseA (rseA) from Mycolicibacterium smegmatis (strain ATCC 700084 / mc(2)155) (Mycobacterium smegmatis).